The sequence spans 329 residues: Peroxidase 17 (329 aa).

Positions 1–19 (MSLLPHLILYLTLLTVVVT) are cleaved as a signal peptide. 4 disulfide bridges follow: cysteine 32-cysteine 112, cysteine 65-cysteine 70, cysteine 118-cysteine 315, and cysteine 197-cysteine 229. Histidine 63 acts as the Proton acceptor in catalysis. Residues aspartate 64, valine 67, glycine 69, aspartate 71, and serine 73 each contribute to the Ca(2+) site. Substrate is bound at residue proline 160. Residues asparagine 165 and asparagine 177 are each glycosylated (N-linked (GlcNAc...) asparagine). Histidine 190 provides a ligand contact to heme b. Serine 191 lines the Ca(2+) pocket. 2 N-linked (GlcNAc...) asparagine glycosylation sites follow: asparagine 206 and asparagine 236. Aspartate 242, threonine 244, and aspartate 249 together coordinate Ca(2+).

Belongs to the peroxidase family. Classical plant (class III) peroxidase subfamily. The cofactor is heme b. Ca(2+) is required as a cofactor.

Its subcellular location is the secreted. The protein localises to the vacuole. The enzyme catalyses 2 a phenolic donor + H2O2 = 2 a phenolic radical donor + 2 H2O. Its function is as follows. Removal of H(2)O(2), oxidation of toxic reductants, biosynthesis and degradation of lignin, suberization, auxin catabolism, response to environmental stresses such as wounding, pathogen attack and oxidative stress. These functions might be dependent on each isozyme/isoform in each plant tissue. The sequence is that of Peroxidase 17 (PER17) from Arabidopsis thaliana (Mouse-ear cress).